Here is a 575-residue protein sequence, read N- to C-terminus: MNTKGKVVGVNGNLVTIEVEGSVSMNEVLFVKTAGRNLKAEVIRIRGNEVDAQVFELTKGISVGDLVEFTDKLLTVELGPGLLTQVYDGLQNPLPELAIQCGFFLERGVYLRPLNKDKKWNFKKTSKVGDIVIAGDFLGFVIEGTVHHQIMIPFYKRDSYKIVEIVSDGDYSIDEQIAVIEDDSGMRHNITMSFHWPVKVPITNYKERLIPSEPMLTQTRIIDTFFPVAKGGTFCIPGPFGAGKTVLQQVTSRNADVDVVIIAACGERAGEVVETLKEFPELMDPKTGKSLMDRTCIICNTSSMPVAAREASVYTAITIGEYYRQMGLDILLLADSTSRWAQAMREMSGRLEEIPGEEAFPAYLESVIASFYERAGIVVLNNGDIGSVTVGGSVSPAGGNFEEPVTQATLKVVGAFHGLTRERSDARKFPAISPLESWSKYKGVIDQKKTEYARSFLVKGNEINQMMKVVGEEGISNDDFLIYLKSELLDSCYLQQNSFDSIDAAVSSERQNYMFDIVYNILKTNFEFSDKLQARDFINELRQNLLDMNLSSFKDHKFNKLEHALGELINFKKVI.

An ATP-binding site is contributed by 238-245 (GPFGAGKT).

This sequence belongs to the ATPase alpha/beta chains family.

It catalyses the reaction ATP + H2O + 4 H(+)(in) = ADP + phosphate + 5 H(+)(out). In terms of biological role, produces ATP from ADP in the presence of a proton gradient across the membrane. The V-type alpha chain is a catalytic subunit. In Borreliella burgdorferi (strain ATCC 35210 / DSM 4680 / CIP 102532 / B31) (Borrelia burgdorferi), this protein is V-type ATP synthase alpha chain (atpA).